We begin with the raw amino-acid sequence, 159 residues long: Ribosome maturation factor RimP (159 aa).

This sequence belongs to the RimP family.

Its subcellular location is the cytoplasm. Functionally, required for maturation of 30S ribosomal subunits. The sequence is that of Ribosome maturation factor RimP from Streptococcus pneumoniae serotype 19F (strain G54).